A 92-amino-acid chain; its full sequence is DNA-directed RNA polymerase subunit Rpo11 (92 aa).

This sequence belongs to the archaeal Rpo11/eukaryotic RPB11/RPC19 RNA polymerase subunit family. In terms of assembly, part of the 13-subunit RNA polymerase complex.

The protein resides in the cytoplasm. The catalysed reaction is RNA(n) + a ribonucleoside 5'-triphosphate = RNA(n+1) + diphosphate. Functionally, DNA-dependent RNA polymerase (RNAP) catalyzes the transcription of DNA into RNA using the four ribonucleoside triphosphates as substrates. This chain is DNA-directed RNA polymerase subunit Rpo11, found in Saccharolobus shibatae (strain ATCC 51178 / DSM 5389 / JCM 8931 / NBRC 15437 / B12) (Sulfolobus shibatae).